We begin with the raw amino-acid sequence, 482 residues long: Chitobiosyldiphosphodolichol beta-mannosyltransferase (482 aa).

At 1–2 the chain is on the lumenal side; the sequence is MA. Residues 3–23 form a helical membrane-spanning segment; it reads ASCVALLVLALLLLVLLLGLW. Topologically, residues 24 to 99 are cytoplasmic; it reads KRGRQTGRAR…DLRGLGAGPR (76 aa). Positions 100–120 form an intramembrane region, helical; sequence ILQYGVKVVFQAVYLLWKMMR. At 121-482 the chain is on the cytoplasmic side; the sequence is MDPAAYIFLQ…PCGHPSCRGF (362 aa). Ser242 carries the phosphoserine modification.

This sequence belongs to the glycosyltransferase group 1 family. Glycosyltransferase 33 subfamily.

Its subcellular location is the endoplasmic reticulum membrane. The enzyme catalyses an N,N'-diacetylchitobiosyl-diphospho-di-trans,poly-cis-dolichol + GDP-alpha-D-mannose = a beta-D-Man-(1-&gt;4)-beta-D-GlcNAc-(1-&gt;4)-alpha-D-GlcNAc-diphospho-di-trans,poly-cis-dolichol + GDP + H(+). The protein operates within protein modification; protein glycosylation. Mannosyltransferase that operates in the biosynthetic pathway of dolichol-linked oligosaccharides, the glycan precursors employed in protein asparagine (N)-glycosylation. The assembly of dolichol-linked oligosaccharides begins on the cytosolic side of the endoplasmic reticulum membrane and finishes in its lumen. The sequential addition of sugars to dolichol pyrophosphate produces dolichol-linked oligosaccharides containing fourteen sugars, including two GlcNAcs, nine mannoses and three glucoses. Once assembled, the oligosaccharide is transferred from the lipid to nascent proteins by oligosaccharyltransferases. Catalyzes, on the cytoplasmic face of the endoplasmic reticulum, the addition of the first mannose residues to the dolichol-linked oligosaccharide chain, to produce Man1GlcNAc(2)-PP-dolichol core oligosaccharide. Man1GlcNAc(2)-PP-dolichol is a substrate for ALG2, the following enzyme in the biosynthetic pathway. This Mus musculus (Mouse) protein is Chitobiosyldiphosphodolichol beta-mannosyltransferase.